The chain runs to 397 residues: MLKDIFFEQVKPAYGCTEPIAIALSTAVGKKYSKGNVKSINITLDKNTYKNGLVVNIPGTNTFGLELAAALGYLCGDGNKGLEVLKDINEDCLKKAMKMKNMVNISLNEEQHLFVNTTIIAENTVQIVIEGKHDNIAKIVVNDKVIKNEEFHPGMTSIEKIKNYSLDKIIKYVEHPDEDVLKYVEKAIDMNLKIAEYGINTKGNFSNAAINEYVKYVSAGVDARMSGVLMPVMTVAGSGNQGLACILPIAIFKGKVEREKLLKATLLSILVTIYIKAYTGLLTPICGAGSISSAGAAAGLTYLKGGNNTQIKNAINDTLGTLFGLTCDGAKRGCALKAITGTFTALQVSSLALNNIDVPCGNGIVAKDVEETIRRVEKLTNSVKNFDKDVLDYIGKC.

Belongs to the UPF0597 family.

The sequence is that of UPF0597 protein Tmel_1007 from Thermosipho melanesiensis (strain DSM 12029 / CIP 104789 / BI429).